A 229-amino-acid chain; its full sequence is MSDDRLIVALDVPNVVQGLALAEKLGDAVSFYKIGLGMLTGGGLALANELKQDHGKRIFLDMKLFDISATVEAAVRGLAQFNLDFLTVHGDPHVVRAAKEGAAGSDTKILAVTILTSLDRTDLDDCLIRDGEMLDLVAERAGRAFEAGADGVISSPHEATMIRALPEAKGRLIVTPGVRPTGSASGDQKRIATPRQAIADGADHIVVGRPIWQHQDPRAAAQMVVADLP.

Residues D11, K33, 61–70 (DMKLFDISAT), T116, R179, Q188, G208, and R209 each bind substrate. K63 (proton donor) is an active-site residue.

This sequence belongs to the OMP decarboxylase family. Type 1 subfamily. Homodimer.

The enzyme catalyses orotidine 5'-phosphate + H(+) = UMP + CO2. The protein operates within pyrimidine metabolism; UMP biosynthesis via de novo pathway; UMP from orotate: step 2/2. Its function is as follows. Catalyzes the decarboxylation of orotidine 5'-monophosphate (OMP) to uridine 5'-monophosphate (UMP). The polypeptide is Orotidine 5'-phosphate decarboxylase (Jannaschia sp. (strain CCS1)).